The primary structure comprises 195 residues: Probable GTP-binding protein EngB (195 aa).

The 174-residue stretch at 22 to 195 (QLPEIALAGR…WSALSRYIKR (174 aa)) folds into the EngB-type G domain. GTP-binding positions include 30 to 37 (GRSNVGKS), 57 to 61 (GKTQT), 75 to 78 (DVPG), 142 to 145 (TKLD), and 174 to 176 (FSA). Ser37 and Thr59 together coordinate Mg(2+).

It belongs to the TRAFAC class TrmE-Era-EngA-EngB-Septin-like GTPase superfamily. EngB GTPase family. The cofactor is Mg(2+).

Its function is as follows. Necessary for normal cell division and for the maintenance of normal septation. The chain is Probable GTP-binding protein EngB from Oceanobacillus iheyensis (strain DSM 14371 / CIP 107618 / JCM 11309 / KCTC 3954 / HTE831).